Here is a 493-residue protein sequence, read N- to C-terminus: Reticulophagy regulator 1 (493 aa).

Residues 1–52 (MASPAPPEPAEQGSPALAAAPQAPPPPTRAPPEEPEGAAPPEEGAAAGAGRQ) form a disordered region. Over 1 to 55 (MASPAPPEPAEQGSPALAAAPQAPPPPTRAPPEEPEGAAPPEEGAAAGAGRQVEE) the chain is Cytoplasmic. The segment covering 37 to 52 (GAAPPEEGAAAGAGRQ) has biased composition (low complexity). A helical membrane pass occupies residues 56-76 (AAGGVAAVVTWLLGEPALWLG). Residues 77–87 (GRADELLSWKR) lie on the Lumenal side of the membrane. Residues 80–229 (DELLSWKRPL…LLCAFLCPLF (150 aa)) are reticulon homology domain. A helical transmembrane segment spans residues 88-108 (PLHSLLAFVGANLVFWFLALT). Topologically, residues 109 to 114 (PWRVYH) are cytoplasmic. The helical transmembrane segment at 115–135 (LISVMILTRVIMQIIKDMILS) threads the bilayer. Topologically, residues 136–204 (RTRGAQLWRS…LVCSVCTFFT (69 aa)) are lumenal. Serine 145 is modified (phosphoserine). Residue serine 147 is modified to Phosphoserine; by CAMK2B. Residue serine 149 is modified to Phosphoserine. A helical membrane pass occupies residues 205-225 (ILGSYIPGVILSYLLLLCAFL). Residues 226-493 (CPLFKCNDIG…GFLSNLLGGH (268 aa)) are Cytoplasmic-facing. The span at 315-326 (FNLSEGYTPQTD) shows a compositional bias: polar residues. 2 disordered regions span residues 315 to 394 (FNLS…GLSL) and 435 to 493 (AAPS…LGGH). Over residues 330-344 (DLDRPSEEVFSRDLS) the composition is skewed to basic and acidic residues. At threonine 353 the chain carries Phosphothreonine. Residues 368–388 (ELKRKKEQLDGGPRRSTEKKS) show a composition bias toward basic and acidic residues. Over residues 441–463 (EDTDTEEGDDFELLDQSELDQIE) the composition is skewed to acidic residues. The short motif at 449–454 (DDFELL) is the LIR motif element. Positions 467–486 (GLSQDQEAEAQQNKKSSGFL) are enriched in polar residues.

The protein belongs to the RETREG family. Homooligomer; oligomerization is enhanced following endoplasmic reticulum stress and is mediated by the reticulon homology domain. Interacts with ATG8 family modifier proteins MAP1LC3A, MAP1LC3B, GABARAP, GABARAPL1 and GABARAPL2. In terms of processing, phosphorylation at Ser-147 by CAMK2B enhances oligomerization and membrane scission and reticulophagy activity.

It localises to the golgi apparatus. It is found in the cis-Golgi network membrane. The protein localises to the endoplasmic reticulum membrane. Its function is as follows. Endoplasmic reticulum (ER)-anchored autophagy regulator which mediates ER delivery into lysosomes through sequestration into autophagosomes. Promotes membrane remodeling and ER scission via its membrane bending capacity and targets the fragments into autophagosomes via interaction with ATG8 family proteins. Active under basal conditions. Required for collagen quality control in a LIR motif-dependent manner. Required for long-term survival of nociceptive and autonomic ganglion neurons. The sequence is that of Reticulophagy regulator 1 (RETREG1) from Bos taurus (Bovine).